Reading from the N-terminus, the 372-residue chain is GTP cyclohydrolase 1 type 2 homolog (372 aa).

A divalent metal cation-binding residues include H67, H68, D106, H332, and E335.

It belongs to the GTP cyclohydrolase I type 2/NIF3 family. In terms of assembly, homohexamer.

The protein is GTP cyclohydrolase 1 type 2 homolog of Halalkalibacterium halodurans (strain ATCC BAA-125 / DSM 18197 / FERM 7344 / JCM 9153 / C-125) (Bacillus halodurans).